We begin with the raw amino-acid sequence, 243 residues long: Linker for activation of T-cells family member 2 (243 aa).

At 1-5 (MSSGT) the chain is on the extracellular side. The chain crosses the membrane as a helical; Signal-anchor for type III membrane protein span at residues 6–26 (ELLWPGAALLVLLGVAASLCV). 2 S-palmitoyl cysteine lipidation sites follow: cysteine 25 and cysteine 28. Residues 27-243 (RCSRPGAKRS…VNGEVAATEA (217 aa)) lie on the Cytoplasmic side of the membrane. A Phosphoserine modification is found at serine 44. The residue at position 58 (tyrosine 58) is a Phosphotyrosine. Residues serine 59 and serine 92 each carry the phosphoserine modification. Phosphotyrosine occurs at positions 136, 193, and 233. Residues 174–243 (PTSGLCPSAS…VNGEVAATEA (70 aa)) are disordered.

As to quaternary structure, when phosphorylated, interacts with GRB2. May also interact with SOS1, GAB1 and CBL. Post-translationally, phosphorylated on tyrosines following cross-linking of BCR in B-cells, FCGR1 in myeloid cells, or FCER1 in mast cells; which induces the recruitment of GRB2. May be polyubiquitinated. In terms of tissue distribution, highly expressed in spleen, peripheral blood lymphocytes, and germinal centers of lymph nodes. Also expressed in placenta, lung, pancreas and small intestine. Present in B-cells, NK cells and monocytes. Absent from T-cells (at protein level).

It is found in the cell membrane. Involved in FCER1 (high affinity immunoglobulin epsilon receptor)-mediated signaling in mast cells. May also be involved in BCR (B-cell antigen receptor)-mediated signaling in B-cells and FCGR1 (high affinity immunoglobulin gamma Fc receptor I)-mediated signaling in myeloid cells. Couples activation of these receptors and their associated kinases with distal intracellular events through the recruitment of GRB2. The chain is Linker for activation of T-cells family member 2 (LAT2) from Homo sapiens (Human).